The primary structure comprises 265 residues: Mlc titration factor A (265 aa).

Zn(2+) is bound by residues H111, H148, H152, and E211.

Belongs to the MtfA family. In terms of assembly, interacts with Mlc. Requires Zn(2+) as cofactor.

It is found in the cytoplasm. Functionally, involved in the modulation of the activity of the glucose-phosphotransferase system (glucose-PTS). Interacts with the transcriptional repressor Mlc, preventing its interaction with DNA and leading to the modulation of expression of genes regulated by Mlc, including ptsG, which encodes the PTS system glucose-specific EIICB component. In terms of biological role, shows zinc-dependent metallopeptidase activity. The protein is Mlc titration factor A of Enterobacter sp. (strain 638).